The sequence spans 1390 residues: DNA-directed RNA polymerase subunit beta'' (1390 aa).

Cys-224, Cys-294, Cys-301, and Cys-304 together coordinate Zn(2+).

The protein belongs to the RNA polymerase beta' chain family. RpoC2 subfamily. In plastids the minimal PEP RNA polymerase catalytic core is composed of four subunits: alpha, beta, beta', and beta''. When a (nuclear-encoded) sigma factor is associated with the core the holoenzyme is formed, which can initiate transcription. Zn(2+) is required as a cofactor.

The protein localises to the plastid. It localises to the chloroplast. It carries out the reaction RNA(n) + a ribonucleoside 5'-triphosphate = RNA(n+1) + diphosphate. Its function is as follows. DNA-dependent RNA polymerase catalyzes the transcription of DNA into RNA using the four ribonucleoside triphosphates as substrates. The sequence is that of DNA-directed RNA polymerase subunit beta'' from Ceratophyllum demersum (Rigid hornwort).